A 152-amino-acid polypeptide reads, in one-letter code: MFLVIRVRGTTGVIKNIADTLDMLRLNRISHAVLVEDTPSYNGMLQKAKDYITWGEIDADLLAEIIAKRGKFTGNNKVTDEYVAENSDYKNIDELAKAVIAGEVKLMDLDIKPVFRLHPPRKGYEDIRLSVKEGGSLGYRGENIKDLAERML.

Belongs to the universal ribosomal protein uL30 family. Part of the 50S ribosomal subunit.

This is Large ribosomal subunit protein uL30 from Methanobrevibacter smithii (strain ATCC 35061 / DSM 861 / OCM 144 / PS).